Here is a 117-residue protein sequence, read N- to C-terminus: Gamma-aminobutyric acid receptor-associated protein-like 2 (117 aa).

At lysine 24 the chain carries N6-acetyllysine. A phosphoserine mark is found at serine 39, serine 87, and serine 88. Glycine 116 is lipidated: Phosphatidylethanolamine amidated glycine; alternate. Glycine 116 carries the Phosphatidylserine amidated glycine; alternate lipid modification. A propeptide (removed in mature form) is located at residue phenylalanine 117.

It belongs to the ATG8 family. In terms of assembly, monomer. Interacts with ATG3, ATG7, ATG13 and ULK1. Interacts with TP53INP1 and TP53INP2. Interacts with TBC1D25. Directly interacts with SQSTM1 and BNIP3. Interacts with TECPR2 and PCM1. Interacts with TBC1D5. Interacts with TRIM5. Interacts with MEFV and TRIM21. Interacts with WDFY3. Interacts with UBA5; promoting recruitment of UBA5 to the endoplasmic reticulum membrane. Interacts with GOSR1. Interacts with KBTBD6 and KBTBD7; the interaction is direct. Interacts with reticulophagy regulators RETREG1, RETREG2 and RETREG3. Interacts with IRGM. Interacts with DNM2. Interacts with NCOA4. Interacts with IRGQ. The precursor molecule is cleaved by ATG4 (ATG4A, ATG4B, ATG4C or ATG4D) to expose the glycine at the C-terminus and form the cytosolic form, GABARAPL2-I. The processed form is then activated by APG7L/ATG7, transferred to ATG3 and conjugated to phosphatidylethanolamine (PE) phospholipid to form the membrane-bound form, GABARAPL2-II. During non-canonical autophagy, the processed form is conjugated to phosphatidylserine (PS) phospholipid. ATG4 proteins also mediate the delipidation of PE-conjugated forms required for GABARAPL2 recycling when autophagosomes fuse with lysosomes. In addition, ATG4B and ATG4D mediate delipidation of ATG8 proteins conjugated to PS during non-canonical autophagy. ATG4B constitutes the major protein for proteolytic activation. ATG4D is the main enzyme for delipidation activity. Post-translationally, phosphorylation at Ser-87 and Ser-88 by TBK1 prevents interaction with ATG4 (ATG4A, ATG4B, ATG4C or ATG4D). Phosphorylation by TBK1 on autophagosomes prevents their delipidation by ATG4 and premature removal from nascent autophagosomes. Ubiquitous. Expressed at high levels in the brain, heart, prostate, ovary, spleen and skeletal muscle. Expressed at very low levels in lung, thymus and small intestine.

Its subcellular location is the cytoplasmic vesicle. It localises to the autophagosome. The protein localises to the endoplasmic reticulum membrane. The protein resides in the golgi apparatus. Functionally, ubiquitin-like modifier involved in intra-Golgi traffic. Modulates intra-Golgi transport through coupling between NSF activity and SNAREs activation. It first stimulates the ATPase activity of NSF which in turn stimulates the association with GOSR1. Involved in autophagy. Plays a role in mitophagy which contributes to regulate mitochondrial quantity and quality by eliminating the mitochondria to a basal level to fulfill cellular energy requirements and preventing excess ROS production. Whereas LC3s are involved in elongation of the phagophore membrane, the GABARAP/GATE-16 subfamily is essential for a later stage in autophagosome maturation. The sequence is that of Gamma-aminobutyric acid receptor-associated protein-like 2 from Bos taurus (Bovine).